A 112-amino-acid polypeptide reads, in one-letter code: Thioredoxin-like protein YdfQ (112 aa).

The Thioredoxin domain occupies 1-107; that stretch reads MKEMTGLHSL…LEQKLKRVYR (107 aa). Cys32 and Cys35 form a disulfide bridge.

The protein is Thioredoxin-like protein YdfQ (ydfQ) of Bacillus subtilis (strain 168).